Here is a 323-residue protein sequence, read N- to C-terminus: Ribonuclease Z (323 aa).

Zn(2+) contacts are provided by His-62, His-64, Asp-66, His-67, His-144, Asp-215, and His-273. Residue Asp-66 is the Proton acceptor of the active site.

This sequence belongs to the RNase Z family. In terms of assembly, homodimer. Requires Zn(2+) as cofactor.

The catalysed reaction is Endonucleolytic cleavage of RNA, removing extra 3' nucleotides from tRNA precursor, generating 3' termini of tRNAs. A 3'-hydroxy group is left at the tRNA terminus and a 5'-phosphoryl group is left at the trailer molecule.. In terms of biological role, zinc phosphodiesterase, which displays some tRNA 3'-processing endonuclease activity. Probably involved in tRNA maturation, by removing a 3'-trailer from precursor tRNA. The chain is Ribonuclease Z from Synechococcus sp. (strain WH7803).